The following is a 178-amino-acid chain: MYHRLILLALVGTTMANVIPFSMSNIPEEYKEFIPEEVRNFYKDLTVEDKEILRELASKHATFANEDAALEALKDKSDKLYKNAVELRNFVKAKIDSLKPDAKIFVDEIIAKARSLRSDDGHKLDTEKIKQAARDIIAKYQALSEETKEELKVTFPAIAKIIGNEKLKRNASTFLQKN.

The first 16 residues, 1-16, serve as a signal peptide directing secretion; that stretch reads MYHRLILLALVGTTMA. 2 coiled-coil regions span residues 67–89 and 130–153; these read DAAL…ELRN and KQAA…ELKV.

Belongs to the fatty-acid and retinol-binding protein (FARBP) family. In terms of processing, not glycosylated.

It is found in the secreted. Binds retinol. Also binds the fluorescent fatty acid 11-((5-dimethylaminonaphthalene-1-sulfonyl)amino)undecanoic acid (DAUDA). The long chain fatty acid oleic acid can act competitively to displace bound DAUDA and retinol. This Brugia malayi (Filarial nematode worm) protein is Fatty-acid and retinol-binding protein 1.